We begin with the raw amino-acid sequence, 739 residues long: MVKIKKTKGMRKQIRLNEVEEINLLKQWIESQKPDSGFNPLSLRPLPKDSKIGKSEDGKNGTVFSRYAGVRKFAQLPISDKTKRGLKDAKYVDMTDVQSAAIPHALCGRDILGAARTGSGKTLAFVIPILEKLHRERWSPEDGVGCIIISPTRELAAQTFGVLNKVGKFHKFSAGLLIGGREGVDVEKERVHEMNILVCAPGRLLQHMDETPNFECPQLQILILDEADRVLDSAFKGQLDPIISQLPKHRQTLLFSATQTKKVKDLARLSLRDPEYISVHAEAVTATPTSLMQTVMIVPVEKKLDMLWSFIKTHLNSRILVFLSTKKQVKFVHEAFNKLRPGIPLKSLHGKMSQEKRMGVYSQFIERQSVLFCTDVLARGLDFDKAVDWVVQVDCPEDVASYIHRVGRTARFYTQGKSLLFLTPSEEKMIEKLQEAKVPIKLIKANNQKLQEVSRLLAALLVKYPDLQGVAQRAFITYLRSIHKRRDKEIFDVSKLSIENFSASLGLPMTPRIRFTNLKTKKKGVYESSIAMEIENAQEYEAPLVVKKDLLGEDLEEEDFALKPRKEGKVVEKSTKEEEVLIPGNRVLKNKKLKINLHRPFGSRVVLDEEGNSLAPLASVAAEAGTEVALDEERMNDYYKKVGAEMRKADIEDKKVDKERRREKRMKQKIKRKRGAMEDEEEEEEEDHDGSGSSDDETGRNSKRAKKIVSDNEENGGKINTDSLSVADLEEMALKFITQ.

The Q motif signature appears at 71-99 (RKFAQLPISDKTKRGLKDAKYVDMTDVQS). One can recognise a Helicase ATP-binding domain in the interval 102-277 (IPHALCGRDI…RLSLRDPEYI (176 aa)). Residue 115-122 (ARTGSGKT) coordinates ATP. Residues 225 to 228 (DEAD) carry the DEAD box motif. The region spanning 303–461 (KLDMLWSFIK…EVSRLLAALL (159 aa)) is the Helicase C-terminal domain. Residues 643 to 689 (GAEMRKADIEDKKVDKERRREKRMKQKIKRKRGAMEDEEEEEEEDHD) are a coiled coil. A disordered region spans residues 656-725 (VDKERRREKR…GGKINTDSLS (70 aa)). Residues 661-674 (RREKRMKQKIKRKR) show a composition bias toward basic residues. Residues 678 to 688 (EDEEEEEEEDH) show a composition bias toward acidic residues.

The protein belongs to the DEAD box helicase family. DDX10/DBP4 subfamily.

It carries out the reaction ATP + H2O = ADP + phosphate + H(+). The polypeptide is DEAD-box ATP-dependent RNA helicase 32 (RH32) (Arabidopsis thaliana (Mouse-ear cress)).